A 214-amino-acid polypeptide reads, in one-letter code: CRISPR-associated protein Cas5 (214 aa).

It belongs to the CRISPR-associated protein Cas5 family.

Its function is as follows. CRISPR (clustered regularly interspaced short palindromic repeat) is an adaptive immune system that provides protection against mobile genetic elements (viruses, transposable elements and conjugative plasmids). CRISPR clusters contain spacers, sequences complementary to antecedent mobile elements, and target invading nucleic acids. CRISPR clusters are transcribed and processed into CRISPR RNA (crRNA). In terms of biological role, has a role in fruiting body development, sporulation and aggregation. The chain is CRISPR-associated protein Cas5 (devS) from Myxococcus xanthus (strain DK1622).